Here is a 306-residue protein sequence, read N- to C-terminus: Pantothenate kinase (306 aa).

ATP is bound at residue 90-97; that stretch reads GSVAVGKS.

This sequence belongs to the prokaryotic pantothenate kinase family.

It localises to the cytoplasm. It catalyses the reaction (R)-pantothenate + ATP = (R)-4'-phosphopantothenate + ADP + H(+). The protein operates within cofactor biosynthesis; coenzyme A biosynthesis; CoA from (R)-pantothenate: step 1/5. This Ligilactobacillus salivarius (strain UCC118) (Lactobacillus salivarius) protein is Pantothenate kinase.